The primary structure comprises 701 residues: Kinesin-like protein KIN-10C (701 aa).

The Kinesin motor domain maps to 8-318; that stretch reads VVRVVARVKP…LNLASRICLG (311 aa). 94-101 contacts ATP; sequence GARNSGKT.

The protein belongs to the TRAFAC class myosin-kinesin ATPase superfamily. Kinesin family. KIN-10 subfamily.

This chain is Kinesin-like protein KIN-10C, found in Arabidopsis thaliana (Mouse-ear cress).